The chain runs to 444 residues: Spermidine/putrescine import ATP-binding protein PotA (444 aa).

In terms of domain architecture, ABC transporter spans 11–332 (ISLVDVDKEF…PVNKWVANFI (322 aa)). Position 43-50 (43-50 (GPSGSGKT)) interacts with ATP. The interval 111-201 (RIKKKAEEIP…ESFKKKYLTR (91 aa)) is insert.

Belongs to the ABC transporter superfamily. Spermidine/putrescine importer (TC 3.A.1.11.1) family. The complex is composed of two ATP-binding proteins (PotA), two transmembrane proteins (PotB and PotC) and a solute-binding protein (PotD).

Its subcellular location is the cell membrane. The catalysed reaction is ATP + H2O + polyamine-[polyamine-binding protein]Side 1 = ADP + phosphate + polyamineSide 2 + [polyamine-binding protein]Side 1.. In terms of biological role, part of the ABC transporter complex PotABCD involved in spermidine/putrescine import. Responsible for energy coupling to the transport system. The sequence is that of Spermidine/putrescine import ATP-binding protein PotA from Mesomycoplasma hyopneumoniae (strain 232) (Mycoplasma hyopneumoniae).